The sequence spans 461 residues: MSKPLKVLCLHGWIQSGPVFSKKMGSVQKYLSKYAELHFPTGPVVADEEADPNDEEEKKRLAALGGEQNGGKFGWFEVEDFKNTYGSWDESLECINQYMQEKGPFDGLIGFSQGAGIGAMLAQMLQPGQPPNPYVQHPPFKFVVFVGGFRAEKPEFDHFYNPKLTTPSLHIAGTSDTLVPLARSKQLVERCENAHVLLHPGQHIVPQQAVYKTGIRDFMFSAPTKEPTKHPRDLTMIVAVSSPNLGIGKKNSMPWHIKQEMAYFANVTSSTESSGQLEEGKSKIMNVVIMGRSCYDSLPKKNRPLKDRINIVITRNSNYNFGLTKKEKMPENLYAADCIDSALDLVAEKYGADSDIQVGKVFIIGGSFLYGSALYHPLTKNLLFTRIHKEYPCDSFFPFEPAESSDWVRKAHPELEKFVGIPVEEGRLKAASSNKEEVEIEFELYGKNDDVNVALEKLSIC.

The DHFR domain maps to 233–447 (DLTMIVAVSS…VEIEFELYGK (215 aa)). NADP(+) contacts are provided by residues alanine 239 and 246–252 (GIGKKNS). Residue 260 to 265 (EMAYFA) coordinates substrate. Residue 292–294 (RSC) coordinates NADP(+). Arginine 308 contributes to the substrate binding site. Residues 314-316 (TRN) and 365-372 (GGSFLYGS) each bind NADP(+).

It belongs to the dihydrofolate reductase family.

It carries out the reaction (6S)-5,6,7,8-tetrahydrofolate + NADP(+) = 7,8-dihydrofolate + NADPH + H(+). It functions in the pathway cofactor biosynthesis; tetrahydrofolate biosynthesis; 5,6,7,8-tetrahydrofolate from 7,8-dihydrofolate: step 1/1. Functionally, key enzyme in folate metabolism. Catalyzes an essential reaction for de novo glycine and purine synthesis, and for DNA precursor synthesis. This chain is Dihydrofolate reductase (dfr1), found in Schizosaccharomyces pombe (strain 972 / ATCC 24843) (Fission yeast).